The following is a 310-amino-acid chain: Methionyl-tRNA formyltransferase (310 aa).

111-114 (SLLP) contacts (6S)-5,6,7,8-tetrahydrofolate.

It belongs to the Fmt family.

The catalysed reaction is L-methionyl-tRNA(fMet) + (6R)-10-formyltetrahydrofolate = N-formyl-L-methionyl-tRNA(fMet) + (6S)-5,6,7,8-tetrahydrofolate + H(+). Functionally, attaches a formyl group to the free amino group of methionyl-tRNA(fMet). The formyl group appears to play a dual role in the initiator identity of N-formylmethionyl-tRNA by promoting its recognition by IF2 and preventing the misappropriation of this tRNA by the elongation apparatus. The polypeptide is Methionyl-tRNA formyltransferase (Rhodopseudomonas palustris (strain BisB18)).